The following is a 214-amino-acid chain: Adenylate kinase (214 aa).

Residue 14-19 (GSGKGT) coordinates ATP. The tract at residues 32–61 (SVGKVLRTVMESNTAEADVVKKFIKSGKLV) is NMP. Residues R38, 59–61 (KLV), 87–90 (GYPR), and Q94 each bind AMP. The interval 124-162 (GRISCTDCGTIYNKLYCMPKINGVCDICNSSSFQNRVDD) is LID. ATP is bound at residue R125. Zn(2+)-binding residues include C128 and C131. 134–135 (IY) serves as a coordination point for ATP. 2 residues coordinate Zn(2+): C148 and C151. R159 and R170 together coordinate AMP. Residue Q198 participates in ATP binding.

This sequence belongs to the adenylate kinase family. In terms of assembly, monomer.

It localises to the cytoplasm. The enzyme catalyses AMP + ATP = 2 ADP. The protein operates within purine metabolism; AMP biosynthesis via salvage pathway; AMP from ADP: step 1/1. Its function is as follows. Catalyzes the reversible transfer of the terminal phosphate group between ATP and AMP. Plays an important role in cellular energy homeostasis and in adenine nucleotide metabolism. In Orientia tsutsugamushi (strain Ikeda) (Rickettsia tsutsugamushi), this protein is Adenylate kinase.